The chain runs to 741 residues: Protein lin-54 homolog (741 aa).

The 114-residue stretch at 513 to 626 (PRKPCNCTKS…KCIGCKNFEE (114 aa)) folds into the CRC domain. Residues 515–528 (KPCNCTKSLCLKLY) form a DNA-binding region. The Zn(2+) site is built by cysteine 517, cysteine 519, cysteine 524, cysteine 529, cysteine 531, cysteine 538, cysteine 541, cysteine 543, and cysteine 546. A linker region spans residues 575 to 588 (IGKGKEGESDRRHS). Zn(2+) is bound by residues cysteine 591, cysteine 593, cysteine 598, cysteine 603, cysteine 605, cysteine 612, cysteine 616, cysteine 618, and cysteine 621. The tract at residues 591 to 604 (CNCKRSGCLKNYCE) is DNA-binding.

The protein belongs to the lin-54 family. Component of the DREAM complex.

The protein localises to the nucleus. Its function is as follows. Component of the DREAM complex, a multiprotein complex that can both act as a transcription activator or repressor depending on the context. Specifically recognizes the consensus motif 5'-TTYRAA-3' in target DNA. The chain is Protein lin-54 homolog (lin54) from Xenopus tropicalis (Western clawed frog).